The primary structure comprises 764 residues: 5-methyltetrahydropteroyltriglutamate--homocysteine methyltransferase (764 aa).

5-methyltetrahydropteroyltri-L-glutamate-binding positions include 16-19 and Lys-121; that span reads RELK. L-homocysteine contacts are provided by residues 440-442 and Glu-493; that span reads IGS. L-methionine is bound by residues 440–442 and Glu-493; that span reads IGS. Residues 524–525 and Trp-570 contribute to the 5-methyltetrahydropteroyltri-L-glutamate site; that span reads RC. Residue Asp-608 participates in L-homocysteine binding. Asp-608 is an L-methionine binding site. Glu-614 contacts 5-methyltetrahydropteroyltri-L-glutamate. The Zn(2+) site is built by His-650, Cys-652, and Glu-674. The Proton donor role is filled by His-703. A Zn(2+)-binding site is contributed by Cys-735.

The protein belongs to the vitamin-B12 independent methionine synthase family. Zn(2+) is required as a cofactor.

It catalyses the reaction 5-methyltetrahydropteroyltri-L-glutamate + L-homocysteine = tetrahydropteroyltri-L-glutamate + L-methionine. The protein operates within amino-acid biosynthesis; L-methionine biosynthesis via de novo pathway; L-methionine from L-homocysteine (MetE route): step 1/1. Catalyzes the transfer of a methyl group from 5-methyltetrahydrofolate to homocysteine resulting in methionine formation. The protein is 5-methyltetrahydropteroyltriglutamate--homocysteine methyltransferase of Burkholderia cenocepacia (strain ATCC BAA-245 / DSM 16553 / LMG 16656 / NCTC 13227 / J2315 / CF5610) (Burkholderia cepacia (strain J2315)).